We begin with the raw amino-acid sequence, 366 residues long: Protein-glutamate methylesterase/protein-glutamine glutaminase (366 aa).

The 119-residue stretch at 5 to 123 (RVLVVDDSVV…SVGRSMEQVR (119 aa)) folds into the Response regulatory domain. Aspartate 56 carries the 4-aspartylphosphate modification. The CheB-type methylesterase domain occupies 163-355 (PLGGHRLLVI…PEILRRLARQ (193 aa)). Residues serine 175, histidine 201, and aspartate 297 contribute to the active site.

It belongs to the CheB family. Phosphorylated by CheA. Phosphorylation of the N-terminal regulatory domain activates the methylesterase activity.

It is found in the cytoplasm. The enzyme catalyses [protein]-L-glutamate 5-O-methyl ester + H2O = L-glutamyl-[protein] + methanol + H(+). The catalysed reaction is L-glutaminyl-[protein] + H2O = L-glutamyl-[protein] + NH4(+). Involved in chemotaxis. Part of a chemotaxis signal transduction system that modulates chemotaxis in response to various stimuli. Catalyzes the demethylation of specific methylglutamate residues introduced into the chemoreceptors (methyl-accepting chemotaxis proteins or MCP) by CheR. Also mediates the irreversible deamidation of specific glutamine residues to glutamic acid. The chain is Protein-glutamate methylesterase/protein-glutamine glutaminase from Nocardioides sp. (strain ATCC BAA-499 / JS614).